A 406-amino-acid chain; its full sequence is Ubiquitin-associated domain-containing protein 1 (406 aa).

A Ubiquitin-like domain is found at 14–98 (LRLHICSLDG…LLLVKKRAPP (85 aa)). A disordered region spans residues 95-122 (RAPPPTPKMAEVSADEKRKQDQKAPDKD). Residues 108–122 (ADEKRKQDQKAPDKD) are compositionally biased toward basic and acidic residues. One can recognise a UBA 1 domain in the interval 186-231 (EDDEDRVDEVALRQLTEMGFPESRAVKALRLNHMSVTQAMEWLIEH). Residues 238-257 (DAPLPCENSSEAAGGLATGE) show a composition bias toward low complexity. The segment at 238 to 272 (DAPLPCENSSEAAGGLATGEAETKPTLGAGAEDPK) is disordered. The region spanning 289–329 (RPDPRAVIALMEMGFDEKEVIDALRVNNNQQDAACEWLLGD) is the UBA 2 domain. Residues 354-393 (NPVVQLGLTNPKTLLAFEDMLENPLNSTQWMNDPETGPVM) enclose the STI1 domain.

In terms of assembly, component of the KPC complex.

It localises to the cytoplasm. It functions in the pathway protein modification; protein ubiquitination. In terms of biological role, non-catalytic component of the KPC complex, a E3 ubiquitin-protein ligase complex that mediates polyubiquitination of target proteins, such as CDKN1B and NFKB1. Within the KPC complex, UBAC1 acts as an adapter that promotes the transfer of target proteins that have been polyubiquitinated by RNF123/KPC1 to the 26S proteasome. The polypeptide is Ubiquitin-associated domain-containing protein 1 (ubac1) (Xenopus tropicalis (Western clawed frog)).